A 124-amino-acid chain; its full sequence is Small ribosomal subunit protein uS10z/uS10x (124 aa).

The protein belongs to the universal ribosomal protein uS10 family.

This is Small ribosomal subunit protein uS10z/uS10x (RPS20A) from Arabidopsis thaliana (Mouse-ear cress).